Reading from the N-terminus, the 276-residue chain is Large ribosomal subunit protein uL2 (276 aa).

The disordered stretch occupies residues 221 to 276 (RGSVMNPNDHPHGGGEGRAPIGRKAPVTPWGKPTLGLKTRKKKNKSDQYIIRRRKK).

The protein belongs to the universal ribosomal protein uL2 family. As to quaternary structure, part of the 50S ribosomal subunit. Forms a bridge to the 30S subunit in the 70S ribosome.

In terms of biological role, one of the primary rRNA binding proteins. Required for association of the 30S and 50S subunits to form the 70S ribosome, for tRNA binding and peptide bond formation. It has been suggested to have peptidyltransferase activity; this is somewhat controversial. Makes several contacts with the 16S rRNA in the 70S ribosome. In Brevibacillus brevis (strain 47 / JCM 6285 / NBRC 100599), this protein is Large ribosomal subunit protein uL2.